The primary structure comprises 468 residues: MTVRPRPAAAAIIIAAVFGAAAAAAGGGMVGVDGTQFVVEGGRTIYFSGFNAYWLMMMASDPARRAAVVAAFAQASSRGLNLARTWAFSDGGDQPLQSSPGVYDEAMFQGLDFVIAEARRHGIYLLLCLTNNFDDFGGKRQYVRWAADAGHNLTAGDDFFTSSVVKSYYKNHVKAVLTRVNTVTGVAYKDDPTIFAWELMNEPRCDADPTGGMVQAWVEEMAPYVKRVDGGRHLVTAGLEGFYGDGEHESKELNPWGIYYGTNYVATHRAAGVDFATIHLYPDVWLWGSTADEQAAFFRNWTRSHVHDTAAFLGKPLLVTEYGKFLWKGGGANKTQRNYFLDVVLDAIYASASRGGPLVGGAFWQLLLDDDVVAGMDDLRDGYEIILAEDSRAASIIGEHSEQLASLNGQDAEALRRRRRRPASSHRKTRLGSGGDSDALRLPRTLLIRFISLSRSISSFIQDNFVLF.

The signal sequence occupies residues 1 to 23; it reads MTVRPRPAAAAIIIAAVFGAAAA. Tryptophan 86 lines the substrate pocket. N-linked (GlcNAc...) asparagine glycosylation occurs at asparagine 152. Residue asparagine 201 participates in substrate binding. Catalysis depends on glutamate 202, which acts as the Proton donor. Position 281 (tyrosine 281) interacts with substrate. Asparagine 300 carries an N-linked (GlcNAc...) asparagine glycan. Glutamate 321 functions as the Nucleophile in the catalytic mechanism. An N-linked (GlcNAc...) asparagine glycan is attached at asparagine 333. Residues tryptophan 364 and aspartate 371 each contribute to the substrate site. A disordered region spans residues 415–436; sequence LRRRRRRPASSHRKTRLGSGGD. The segment covering 416–430 has biased composition (basic residues); it reads RRRRRRPASSHRKTR.

This sequence belongs to the glycosyl hydrolase 5 (cellulase A) family. Expressed in seeds.

It localises to the secreted. The enzyme catalyses Random hydrolysis of (1-&gt;4)-beta-D-mannosidic linkages in mannans, galactomannans and glucomannans.. This chain is Mannan endo-1,4-beta-mannosidase 3 (MAN3), found in Oryza sativa subsp. japonica (Rice).